We begin with the raw amino-acid sequence, 544 residues long: T-complex protein 1 subunit gamma (544 aa).

C368 and C374 are oxidised to a cystine. A disordered region spans residues 525 to 544; the sequence is SKKRGGNEPTNPAAMAQGQE.

Belongs to the TCP-1 chaperonin family. In terms of assembly, heterooligomeric complex of about 850 to 900 kDa that forms two stacked rings, 12 to 16 nm in diameter.

The protein localises to the cytoplasm. Molecular chaperone; assists the folding of proteins upon ATP hydrolysis. Known to play a role, in vitro, in the folding of actin and tubulin. The sequence is that of T-complex protein 1 subunit gamma from Drosophila melanogaster (Fruit fly).